The chain runs to 662 residues: Probable quinol oxidase subunit 1 (662 aa).

2 helical membrane passes run 14-34 (WMII…IAVI) and 56-76 (IGIM…IDAL). His102 is a binding site for Fe(II)-heme a. Transmembrane regions (helical) follow at residues 103–123 (GVIM…NVVI), 140–160 (VSFW…IVGG), 187–207 (IAIQ…FVTI), 228–248 (FITT…LALM), 273–293 (FFWV…FGMY), 311–331 (MIWA…HHFF), 336–356 (GALI…PTGV), and 376–396 (MLFS…GVML). The Cu cation site is built by His279, Tyr283, His328, and His329. Positions 279-283 (HPEVY) form a cross-link, 1'-histidyl-3'-tyrosine (His-Tyr). Heme a3 is bound at residue His414. Transmembrane regions (helical) follow at residues 415 to 435 (FHYT…IFWY), 451 to 471 (CFWF…ILGL), 492 to 512 (FIST…VASI), 587 to 604 (PVGF…FFLI), and 608 to 627 (IVPA…WRSF). A Fe(II)-heme a-binding site is contributed by His416.

This sequence belongs to the heme-copper respiratory oxidase family. The cofactor is Cu cation. Ferriheme a is required as a cofactor. It depends on Heme A3. as a cofactor.

The protein resides in the cell membrane. It catalyses the reaction 2 a quinol + O2 = 2 a quinone + 2 H2O. The protein operates within energy metabolism; oxidative phosphorylation. Its function is as follows. Catalyzes quinol oxidation with the concomitant reduction of oxygen to water. In Staphylococcus epidermidis (strain ATCC 35984 / DSM 28319 / BCRC 17069 / CCUG 31568 / BM 3577 / RP62A), this protein is Probable quinol oxidase subunit 1 (qoxB).